The sequence spans 442 residues: Trigger factor (442 aa).

A PPIase FKBP-type domain is found at aspartate 165 to proline 250.

This sequence belongs to the FKBP-type PPIase family. Tig subfamily.

It is found in the cytoplasm. It carries out the reaction [protein]-peptidylproline (omega=180) = [protein]-peptidylproline (omega=0). Involved in protein export. Acts as a chaperone by maintaining the newly synthesized protein in an open conformation. Functions as a peptidyl-prolyl cis-trans isomerase. This chain is Trigger factor, found in Coxiella burnetii (strain RSA 493 / Nine Mile phase I).